Reading from the N-terminus, the 309-residue chain is uncharacterized protein (309 aa).

Positions 1–16 are enriched in basic residues; the sequence is MAGNSRRRGAVRKAGT. The segment at 1-70 is disordered; the sequence is MAGNSRRRGA…AKRTEETETV (70 aa). Glycine 261, isoleucine 281, and leucine 290 together coordinate S-adenosyl-L-methionine.

It belongs to the class IV-like SAM-binding methyltransferase superfamily. RNA methyltransferase TrmH family.

This is an uncharacterized protein from Mycobacterium avium (strain 104).